The sequence spans 506 residues: Vinckepain-1 (506 aa).

Residues 1 to 32 are Cytoplasmic-facing; the sequence is MSDNIGQINFTIPGIQSLDENDTYLKINHKKT. Residues 1-262 constitute a propeptide, activation peptide; it reads MSDNIGQINF…LISVDNKSKD (262 aa). The helical; Signal-anchor for type II membrane protein transmembrane segment at 33–53 threads the bilayer; the sequence is IKICAYAITAIALFFIGGVFF. The Lumenal segment spans residues 54–506; that stretch reads KNQAKINALD…VGSDVFFPIY (453 aa). N-linked (GlcNAc...) asparagine glycans are attached at residues N133 and N258. 4 disulfide bridges follow: C284-C326, C319-C359, C344-C364, and C413-C495. The active site involves C287. N-linked (GlcNAc...) asparagine glycosylation is present at N418. Residues H419 and N470 contribute to the active site.

This sequence belongs to the peptidase C1 family.

The protein resides in the membrane. Its function is as follows. Cysteine protease. The chain is Vinckepain-1 from Plasmodium vinckei.